We begin with the raw amino-acid sequence, 152 residues long: Large ribosomal subunit protein bL9 (152 aa).

Belongs to the bacterial ribosomal protein bL9 family.

Binds to the 23S rRNA. The sequence is that of Large ribosomal subunit protein bL9 from Rippkaea orientalis (strain PCC 8801 / RF-1) (Cyanothece sp. (strain PCC 8801)).